Reading from the N-terminus, the 265-residue chain is Aquaporin-5 (265 aa).

Residues 1–12 (MKKEVCSVAFFK) are Cytoplasmic-facing. The helical transmembrane segment at 13–33 (AVFAEFLATLIFVFFGLGSAL) threads the bilayer. Over 34 to 39 (KWPSAL) the chain is Extracellular. The chain crosses the membrane as a helical span at residues 40–60 (PTILQISIAFGLAIGTLAQAL). Residues 61 to 65 (GPVSG) are Cytoplasmic-facing. The discontinuously helical intramembrane region spans 66–74 (GHINPAITL). Positions 69–71 (NPA) match the NPA 1 motif. The Cytoplasmic portion of the chain corresponds to 75-87 (ALLIGNQISLLRA). Residues 88 to 108 (IFYVAAQLVGAIAGAGILYWL) traverse the membrane as a helical segment. The Extracellular portion of the chain corresponds to 109–126 (APGNARGNLAVNALSNNT). Asparagine 124 carries an N-linked (GlcNAc...) asparagine glycan. Residues 127–147 (TPGKAVVVELILTFQLALCIF) traverse the membrane as a helical segment. Over 148 to 158 (SSTDSRRTSPV) the chain is Cytoplasmic. A helical transmembrane segment spans residues 159–179 (GSPALSIGLSVTLGHLVGIYF). Position 180 (threonine 180) is a topological domain, extracellular. Residues 181-191 (GCSMNPARSFG) constitute an intramembrane region (discontinuously helical). The NPA 2 motif lies at 185–187 (NPA). The Extracellular segment spans residues 192-203 (PAVVMNRFSPSH). The helical transmembrane segment at 204-224 (WVFWVGPIVGAVLAAILYFYL) threads the bilayer. At 225–265 (LFPSSLSLHDRVAVVKGTYEPEEDWEDHREERKKTIELTAH) the chain is on the cytoplasmic side.

This sequence belongs to the MIP/aquaporin (TC 1.A.8) family. Homotetramer; each monomer provides an independent water pore. Interacts with TRPV4; the interaction is probably indirect and regulates TRPV4 activation by hypotonicity. Detected at the luminal membrane of secretory epithelial cells in hindpaw sweat glands. Detected in acinar cells in salivary glands, in duct cells in lacrimal glands and in lung (at protein level). Detected in lung, parotid, submandibular, sublingual, and lacrimal gland tissues.

It is found in the apical cell membrane. It localises to the cell membrane. The protein localises to the cytoplasmic vesicle membrane. It carries out the reaction H2O(in) = H2O(out). Aquaporins form homotetrameric transmembrane channels, with each monomer independently mediating water transport across the plasma membrane along its osmotic gradient. Plays an important role in fluid secretion in salivary glands. Required for TRPV4 activation by hypotonicity. Together with TRPV4, controls regulatory volume decrease in salivary epithelial cells. Seems to play a redundant role in water transport in the eye, lung and in sweat glands. This is Aquaporin-5 from Mus musculus (Mouse).